The following is a 169-amino-acid chain: Eukaryotic translation initiation factor 5A-2 (169 aa).

Position 64 is a hypusine (Lys64).

Belongs to the eIF-5A family. In terms of processing, lys-51 undergoes hypusination, a unique post-translational modification that consists in the addition of a butylamino group from spermidine to lysine side chain, leading to the formation of the unusual amino acid hypusine. eIF-5As are the only known proteins to undergo this modification, which is essential for their function.

Its subcellular location is the cytoplasm. It localises to the nucleus. Functionally, translation factor that promotes translation elongation and termination, particularly upon ribosome stalling at specific amino acid sequence contexts. Binds between the exit (E) and peptidyl (P) site of the ribosome and promotes rescue of stalled ribosome: specifically required for efficient translation of polyproline-containing peptides as well as other motifs that stall the ribosome. Acts as a ribosome quality control (RQC) cofactor by joining the RQC complex to facilitate peptidyl transfer during CAT tailing step. This Schizosaccharomyces pombe (strain 972 / ATCC 24843) (Fission yeast) protein is Eukaryotic translation initiation factor 5A-2 (tif51b).